The following is a 1104-amino-acid chain: Nitrite reductase [NAD(P)H] (1104 aa).

44–79 is an FAD binding site; that stretch reads QKIVVVGLGMVAVAFIEKLVKLDSERRKYDIVVIGE. 146 to 176 serves as a coordination point for NAD(+); it reads YDILVLATGSDAVLPTSTPGHDAKGIFVYRT. The segment at 396–419 is disordered; that stretch reads KFLPGQRPSAESIGAADPNREEEP. Residues C500, C502, C535, and C538 each contribute to the [2Fe-2S] cluster site. Residues C720, C726, C760, and C764 each contribute to the [4Fe-4S] cluster site. Siroheme is bound at residue C764. One can recognise a Rieske domain in the interval 932–1040; it reads WQPVIKADYF…VEEREDGWIY (109 aa). C976, H978, C1001, and H1004 together coordinate [2Fe-2S] cluster. Residues 1081–1104 are disordered; it reads GKRAGAKGIEGSKPTRSPSNTIDW. Residues 1094 to 1104 are compositionally biased toward polar residues; it reads PTRSPSNTIDW.

The protein belongs to the nitrite and sulfite reductase 4Fe-4S domain family. As to quaternary structure, homodimer. The cofactor is siroheme. It depends on [4Fe-4S] cluster as a cofactor. FAD serves as cofactor. Requires [2Fe-2S] cluster as cofactor.

The catalysed reaction is NH4(+) + 3 NADP(+) + 2 H2O = nitrite + 3 NADPH + 5 H(+). The enzyme catalyses NH4(+) + 3 NAD(+) + 2 H2O = nitrite + 3 NADH + 5 H(+). Its pathway is nitrogen metabolism; nitrate reduction (assimilation). The sequence is that of Nitrite reductase [NAD(P)H] (niiA) from Emericella nidulans (strain FGSC A4 / ATCC 38163 / CBS 112.46 / NRRL 194 / M139) (Aspergillus nidulans).